A 114-amino-acid chain; its full sequence is Transmembrane protein 14C (114 aa).

4 helical membrane-spanning segments follow: residues 8–28 (LVPL…GGII), 33–53 (AGSV…GLGS), 62–82 (NIWL…MRFY), and 87–107 (FMPA…LGIS).

The protein localises to the mitochondrion membrane. Functionally, required for normal heme biosynthesis. The protein is Transmembrane protein 14C (TMEM14C) of Bos taurus (Bovine).